The sequence spans 274 residues: MAIVKCKPTSPGRRHVVKVVNPELHKGKPYAPLLEKLSKSGGRNNNGRITTRHIGGGHKQHYRLVDFKRNKDGIPAVVERLEYDPNRSANIALVLYKDGERRYILAPKGLKAGDQIQSGVDAAIKAGNTLPMRNIPVGSTVHNVEMKPGKGGQLARSAGAYVQIVARDGSYVTLRLRSGEMRKVQADCRATLGEVGNAEHMLRVLGKAGASRWRGIRPTVRGTAMNPVDHPHGGGEGRNFGKHPVTPWGVQTKGKKTRSNKRTDKFIVRRRSKK.

The tract at residues 221-274 (RGTAMNPVDHPHGGGEGRNFGKHPVTPWGVQTKGKKTRSNKRTDKFIVRRRSKK) is disordered.

Belongs to the universal ribosomal protein uL2 family. As to quaternary structure, part of the 50S ribosomal subunit. Forms a bridge to the 30S subunit in the 70S ribosome.

One of the primary rRNA binding proteins. Required for association of the 30S and 50S subunits to form the 70S ribosome, for tRNA binding and peptide bond formation. It has been suggested to have peptidyltransferase activity; this is somewhat controversial. Makes several contacts with the 16S rRNA in the 70S ribosome. The polypeptide is Large ribosomal subunit protein uL2 (Yersinia pseudotuberculosis serotype O:1b (strain IP 31758)).